The following is a 93-amino-acid chain: uncharacterized protein (93 aa).

The next 3 membrane-spanning stretches (helical) occupy residues 15 to 35 (MAGLRVLSSMIELTAAIVMLV), 48 to 68 (ILAIVGPLIFIITMTVGIYQI), and 72 to 92 (LSYAKLILIFTGVVLILAGVH).

Its subcellular location is the cell membrane. This is an uncharacterized protein from Bacillus subtilis (strain 168).